Here is a 336-residue protein sequence, read N- to C-terminus: Large ribosomal subunit protein mL39 (336 aa).

The 67-residue stretch at 60–126 (EKIEVKHVGK…TKSCEIKFLT (67 aa)) folds into the TGS domain. Lysine 123 carries the post-translational modification N6-acetyllysine.

It belongs to the mitochondrion-specific ribosomal protein mL39 family. In terms of assembly, component of the mitochondrial ribosome large subunit (39S) which comprises a 16S rRNA and about 50 distinct proteins.

It localises to the mitochondrion. The chain is Large ribosomal subunit protein mL39 (Mrpl39) from Mus musculus (Mouse).